A 195-amino-acid chain; its full sequence is Large ribosomal subunit protein uL18 (195 aa).

It belongs to the universal ribosomal protein uL18 family. Part of the 50S ribosomal subunit. Contacts the 5S and 23S rRNAs.

In terms of biological role, this is one of the proteins that bind and probably mediate the attachment of the 5S RNA into the large ribosomal subunit, where it forms part of the central protuberance. The polypeptide is Large ribosomal subunit protein uL18 (Korarchaeum cryptofilum (strain OPF8)).